The following is a 422-amino-acid chain: Dihydroorotase (422 aa).

Zn(2+)-binding residues include H53 and H55. Substrate is bound by residues 55-57 and N87; that span reads HFR. Positions 138, 172, 223, and 291 each coordinate Zn(2+). The active site involves D291. H295 lines the substrate pocket.

The protein belongs to the metallo-dependent hydrolases superfamily. DHOase family. Class I DHOase subfamily. It depends on Zn(2+) as a cofactor.

The enzyme catalyses (S)-dihydroorotate + H2O = N-carbamoyl-L-aspartate + H(+). Its pathway is pyrimidine metabolism; UMP biosynthesis via de novo pathway; (S)-dihydroorotate from bicarbonate: step 3/3. Catalyzes the reversible cyclization of carbamoyl aspartate to dihydroorotate. The chain is Dihydroorotase from Halobacterium salinarum (strain ATCC 700922 / JCM 11081 / NRC-1) (Halobacterium halobium).